A 332-amino-acid chain; its full sequence is Fructose-1,6-bisphosphatase class 1 1 (332 aa).

Mg(2+) is bound by residues glutamate 92, aspartate 115, leucine 117, and aspartate 118. Residues 118 to 121 (DGSS), asparagine 211, tyrosine 244, 262 to 264 (YLY), and lysine 274 each bind substrate. Glutamate 280 serves as a coordination point for Mg(2+).

This sequence belongs to the FBPase class 1 family. As to quaternary structure, homotetramer. The cofactor is Mg(2+).

The protein localises to the cytoplasm. It catalyses the reaction beta-D-fructose 1,6-bisphosphate + H2O = beta-D-fructose 6-phosphate + phosphate. It participates in carbohydrate biosynthesis; gluconeogenesis. This is Fructose-1,6-bisphosphatase class 1 1 from Christiangramia forsetii (strain DSM 17595 / CGMCC 1.15422 / KT0803) (Gramella forsetii).